The chain runs to 171 residues: Putative rhomboid protein L523 (171 aa).

Helical transmembrane passes span Tyr-3–Phe-23, Phe-67–Thr-87, Val-94–Leu-114, and Gly-119–Ser-139. Catalysis depends on Ser-100, which acts as the Nucleophile. His-143 is a catalytic residue. A helical transmembrane segment spans residues Ile-144–Val-164.

This sequence belongs to the peptidase S54 family.

The protein localises to the membrane. Probable serine protease. This Acanthamoeba polyphaga mimivirus (APMV) protein is Putative rhomboid protein L523.